Consider the following 113-residue polypeptide: MKTTLIFCILGIVIPTAVVSSQDFCGLSQQEREDYWECVERGMSADELNQAKLFLECINKQSAVELLAFFCNADSIEDSIEKEEFRLLFAECLKSHPASFNAGNESCLKEARK.

The N-terminal stretch at 1–21 is a signal peptide; the sequence is MKTTLIFCILGIVIPTAVVSS.

Contains 3 disulfide bonds. Expressed by the venom gland.

Its subcellular location is the secreted. This chain is Venom protein 184, found in Lychas mucronatus (Chinese swimming scorpion).